The chain runs to 176 residues: RNA polymerase sigma factor SigO (176 aa).

The Polymerase core binding signature appears at 30-43 (DARSLDELFKQFYK). The segment at residues 139–158 (MQEIADSLGESRQNISNIHK) is a DNA-binding region (H-T-H motif).

Belongs to the sigma-70 factor family. Interacts with RNA polymerase.

In terms of biological role, sigma factors are initiation factors that promote the attachment of RNA polymerase to specific initiation sites and are then released. Together with its coactivator RsoA, positively regulates the expression of at least three operons, including oxdC-yvrL, sigO-rsoA and yvrJ. Required for the acid stress-dependent induction of the oxalate decarboxylase oxdC. The chain is RNA polymerase sigma factor SigO (sigO) from Bacillus subtilis (strain 168).